The primary structure comprises 74 residues: Ubiquitin-like protein FUBI (74 aa).

Belongs to the ubiquitin family.

The polypeptide is Ubiquitin-like protein FUBI (Fau) (Mus spicilegus (Steppe mouse)).